The sequence spans 1580 residues: Pentafunctional AROM polypeptide (1580 aa).

Residues 1-381 (MATPTVIKIL…HEQKASVVSN (381 aa)) are 3-dehydroquinate synthase. NAD(+) contacts are provided by residues 44 to 46 (DTT), 81 to 84 (EVSK), 114 to 116 (GGV), and Asp119. Arg130 is a 7-phospho-2-dehydro-3-deoxy-D-arabino-heptonate binding site. Residue 139-140 (TT) participates in NAD(+) binding. 7-phospho-2-dehydro-3-deoxy-D-arabino-heptonate-binding residues include Asp146 and Lys152. Lys161 provides a ligand contact to NAD(+). Residue Asn162 participates in 7-phospho-2-dehydro-3-deoxy-D-arabino-heptonate binding. Residues 179–182 (FLNT) and Asn190 contribute to the NAD(+) site. Position 194 (Glu194) interacts with Zn(2+). Position 247 (Lys247) interacts with 7-phospho-2-dehydro-3-deoxy-D-arabino-heptonate. The active-site Proton acceptor; for 3-dehydroquinate synthase activity is Glu257. 7-phospho-2-dehydro-3-deoxy-D-arabino-heptonate contacts are provided by residues 261 to 265 (RNLLN) and His268. Residue His268 coordinates Zn(2+). Residue His272 is the Proton acceptor; for 3-dehydroquinate synthase activity of the active site. 7-phospho-2-dehydro-3-deoxy-D-arabino-heptonate-binding residues include His284 and Lys353. His284 is a binding site for Zn(2+). Residues 394-838 (VSPGVPHALE…WDTLAQLFKA (445 aa)) are EPSP synthase. Residue Cys820 is the For EPSP synthase activity of the active site. The segment at 857-1048 (ASLFIIGMRG…KKKPQSFFVS (192 aa)) is shikimate kinase. 863 to 870 (GMRGAGKT) is a binding site for ATP. The tract at residues 1049-1269 (LTLPDLRPSV…AAPGQLSAKE (221 aa)) is 3-dehydroquinase. The active-site Proton acceptor; for 3-dehydroquinate dehydratase activity is the His1172. Residue Lys1200 is the Schiff-base intermediate with substrate; for 3-dehydroquinate dehydratase activity of the active site. Residues 1282–1580 (SKKFAIVGKP…AAVMNADADI (299 aa)) are shikimate dehydrogenase.

The protein in the N-terminal section; belongs to the sugar phosphate cyclases superfamily. Dehydroquinate synthase family. In the 2nd section; belongs to the EPSP synthase family. This sequence in the 3rd section; belongs to the shikimate kinase family. It in the 4th section; belongs to the type-I 3-dehydroquinase family. The protein in the C-terminal section; belongs to the shikimate dehydrogenase family. In terms of assembly, homodimer. Zn(2+) serves as cofactor.

It is found in the cytoplasm. It carries out the reaction 7-phospho-2-dehydro-3-deoxy-D-arabino-heptonate = 3-dehydroquinate + phosphate. The enzyme catalyses 3-dehydroquinate = 3-dehydroshikimate + H2O. It catalyses the reaction shikimate + NADP(+) = 3-dehydroshikimate + NADPH + H(+). The catalysed reaction is shikimate + ATP = 3-phosphoshikimate + ADP + H(+). It carries out the reaction 3-phosphoshikimate + phosphoenolpyruvate = 5-O-(1-carboxyvinyl)-3-phosphoshikimate + phosphate. The protein operates within metabolic intermediate biosynthesis; chorismate biosynthesis; chorismate from D-erythrose 4-phosphate and phosphoenolpyruvate: step 2/7. Its pathway is metabolic intermediate biosynthesis; chorismate biosynthesis; chorismate from D-erythrose 4-phosphate and phosphoenolpyruvate: step 3/7. It participates in metabolic intermediate biosynthesis; chorismate biosynthesis; chorismate from D-erythrose 4-phosphate and phosphoenolpyruvate: step 4/7. It functions in the pathway metabolic intermediate biosynthesis; chorismate biosynthesis; chorismate from D-erythrose 4-phosphate and phosphoenolpyruvate: step 5/7. The protein operates within metabolic intermediate biosynthesis; chorismate biosynthesis; chorismate from D-erythrose 4-phosphate and phosphoenolpyruvate: step 6/7. In terms of biological role, the AROM polypeptide catalyzes 5 consecutive enzymatic reactions in prechorismate polyaromatic amino acid biosynthesis. This Uncinocarpus reesii (strain UAMH 1704) protein is Pentafunctional AROM polypeptide.